The sequence spans 164 residues: Cold-inducible RNA-binding protein (164 aa).

One can recognise an RRM domain in the interval 6–84 (GKLFVGGLSF…RQIRVDQAGK (79 aa)). Residues 65 to 164 (AGMNGKTVDG…SYRDSYDSYG (100 aa)) form a disordered region. Over residues 93–118 (YRGGSSGGGRGFFRGGRGRGGGGYGG) the composition is skewed to gly residues. Over residues 155–164 (SYRDSYDSYG) the composition is skewed to basic and acidic residues.

In terms of assembly, interacts with prmt1. Interacts with elavl1/elrA (via RRM3). Associates with ribosomes. Post-translationally, methylated on arginine residues within RGG motifs. Methylation by prmt1 promotes cytoplasmic accumulation.

It localises to the nucleus. Its subcellular location is the nucleoplasm. It is found in the cytoplasm. Its function is as follows. Cold-inducible mRNA binding protein. Acts cooperatively with elavl1/elrA to stabilize AU-rich element (ARE)-containing mRNAs by binding to them and inhibiting their deadenylation. Essential for embryonic gastrulation and neural development, acting to maintain the expression of a set of adhesion molecules, and cell movement during embryogenesis. Required for pronephros development. May play a role in hibernation. The protein is Cold-inducible RNA-binding protein of Aquarana catesbeiana (American bullfrog).